Here is a 529-residue protein sequence, read N- to C-terminus: Peptide chain release factor 3 (529 aa).

One can recognise a tr-type G domain in the interval 11 to 280 (AKRRTFAIIS…GLVEWAPAPM (270 aa)). GTP is bound by residues 20 to 27 (SHPDAGKT), 88 to 92 (DTPGH), and 142 to 145 (NKLD).

The protein belongs to the TRAFAC class translation factor GTPase superfamily. Classic translation factor GTPase family. PrfC subfamily.

It is found in the cytoplasm. Its function is as follows. Increases the formation of ribosomal termination complexes and stimulates activities of RF-1 and RF-2. It binds guanine nucleotides and has strong preference for UGA stop codons. It may interact directly with the ribosome. The stimulation of RF-1 and RF-2 is significantly reduced by GTP and GDP, but not by GMP. The protein is Peptide chain release factor 3 of Shigella boydii serotype 18 (strain CDC 3083-94 / BS512).